The primary structure comprises 321 residues: Lipoyl synthase (321 aa).

[4Fe-4S] cluster contacts are provided by Cys-68, Cys-73, Cys-79, Cys-94, Cys-98, Cys-101, and Ser-308. Positions 80 to 297 constitute a Radical SAM core domain; that stretch reads FNHGTATFMI…KEIALELGFT (218 aa).

It belongs to the radical SAM superfamily. Lipoyl synthase family. Requires [4Fe-4S] cluster as cofactor.

The protein resides in the cytoplasm. It catalyses the reaction [[Fe-S] cluster scaffold protein carrying a second [4Fe-4S](2+) cluster] + N(6)-octanoyl-L-lysyl-[protein] + 2 oxidized [2Fe-2S]-[ferredoxin] + 2 S-adenosyl-L-methionine + 4 H(+) = [[Fe-S] cluster scaffold protein] + N(6)-[(R)-dihydrolipoyl]-L-lysyl-[protein] + 4 Fe(3+) + 2 hydrogen sulfide + 2 5'-deoxyadenosine + 2 L-methionine + 2 reduced [2Fe-2S]-[ferredoxin]. It participates in protein modification; protein lipoylation via endogenous pathway; protein N(6)-(lipoyl)lysine from octanoyl-[acyl-carrier-protein]: step 2/2. Its function is as follows. Catalyzes the radical-mediated insertion of two sulfur atoms into the C-6 and C-8 positions of the octanoyl moiety bound to the lipoyl domains of lipoate-dependent enzymes, thereby converting the octanoylated domains into lipoylated derivatives. The polypeptide is Lipoyl synthase (Aliivibrio fischeri (strain MJ11) (Vibrio fischeri)).